Here is a 224-residue protein sequence, read N- to C-terminus: Dehydration-responsive element-binding protein 1G (224 aa).

Over residues 1–16 (MDVSAALSSDYSSGTP) the composition is skewed to polar residues. A disordered region spans residues 1–46 (MDVSAALSSDYSSGTPSPVAADADDGSSAYMTVSSAPPKRRAGRTK). Residues 54–111 (VFKGVRRRNPGRWVCEVREPHGKQRIWLGTFETAEMAARAHDVAALALRGRAACLNFA) constitute a DNA-binding region (AP2/ERF).

This sequence belongs to the AP2/ERF transcription factor family. ERF subfamily.

It is found in the nucleus. Transcriptional activator that binds specifically to the DNA sequence 5'-[AG]CCGAC-3'. Binding to the C-repeat/DRE element mediates high salinity- and dehydration-inducible transcription. The protein is Dehydration-responsive element-binding protein 1G (DREB1G) of Oryza sativa subsp. indica (Rice).